The following is a 251-amino-acid chain: MNLNSIPAFQDNYIWVLTNDEGRCVIVDPGEAAPVLKAIAEHKWMPEAIFLTHHHHDHVGGVKELLQHFPQMTVYGPAETQDKGATHLVDDGDTIRVLGEKFTLFATPGHTLGHVCYFSHPYLFCGDTLFSGGCGRLFEGTPSQMYQSLMKINSLPDDTLICCAHEYTLANIKFALSILPHDSFINEYYRKVKELRVKKQMTLPVILKNERKINLFLRTEDIDLINEINKETILQQPEARFAWLRSKKDTF.

Zn(2+) contacts are provided by H53, H55, D57, H58, H110, D127, and H165.

Belongs to the metallo-beta-lactamase superfamily. Glyoxalase II family. In terms of assembly, monomer. Zn(2+) serves as cofactor.

The catalysed reaction is an S-(2-hydroxyacyl)glutathione + H2O = a 2-hydroxy carboxylate + glutathione + H(+). The protein operates within secondary metabolite metabolism; methylglyoxal degradation; (R)-lactate from methylglyoxal: step 2/2. Thiolesterase that catalyzes the hydrolysis of S-D-lactoyl-glutathione to form glutathione and D-lactic acid. The protein is Hydroxyacylglutathione hydrolase of Salmonella paratyphi A (strain ATCC 9150 / SARB42).